A 320-amino-acid polypeptide reads, in one-letter code: Cytochrome f (320 aa).

An N-terminal signal peptide occupies residues 1 to 35 (MQTRNTFSWIREEITRSISVSLIIYIITRASISSA). The heme site is built by Tyr-36, Cys-56, Cys-59, and His-60. Residues 286 to 306 (VQGLLFFLASVVLAQIFLVLK) form a helical membrane-spanning segment.

This sequence belongs to the cytochrome f family. In terms of assembly, the 4 large subunits of the cytochrome b6-f complex are cytochrome b6, subunit IV (17 kDa polypeptide, petD), cytochrome f and the Rieske protein, while the 4 small subunits are PetG, PetL, PetM and PetN. The complex functions as a dimer. Heme serves as cofactor.

Its subcellular location is the plastid. It localises to the chloroplast thylakoid membrane. Functionally, component of the cytochrome b6-f complex, which mediates electron transfer between photosystem II (PSII) and photosystem I (PSI), cyclic electron flow around PSI, and state transitions. This is Cytochrome f from Draba nemorosa (Woodland whitlowgrass).